We begin with the raw amino-acid sequence, 267 residues long: Small ribosomal subunit protein uS2 (267 aa).

The segment at 224 to 244 is disordered; sequence GRQGEDEDVTEDSFKDNKDAK. Residues 235 to 244 show a composition bias toward basic and acidic residues; sequence DSFKDNKDAK.

Belongs to the universal ribosomal protein uS2 family.

This Lactiplantibacillus plantarum (strain ATCC BAA-793 / NCIMB 8826 / WCFS1) (Lactobacillus plantarum) protein is Small ribosomal subunit protein uS2.